Reading from the N-terminus, the 219-residue chain is Small ribosomal subunit protein uS3 (219 aa).

Residues 38-107 (IREYIENKMK…RVHINVVEVK (70 aa)) enclose the KH type-2 domain.

This sequence belongs to the universal ribosomal protein uS3 family. Part of the 30S ribosomal subunit. Forms a tight complex with proteins S10 and S14.

Its function is as follows. Binds the lower part of the 30S subunit head. Binds mRNA in the 70S ribosome, positioning it for translation. This is Small ribosomal subunit protein uS3 from Exiguobacterium sp. (strain ATCC BAA-1283 / AT1b).